The primary structure comprises 342 residues: ATP-dependent (S)-NAD(P)H-hydrate dehydratase (342 aa).

The 327-residue stretch at 11 to 337 (ILPALEKVVP…EYLGHRLFTF (327 aa)) folds into the YjeF C-terminal domain. (6S)-NADPHX contacts are provided by residues glycine 127 and 180-186 (NVMEHKR). Residues 229-233 (KGKTD) and 248-257 (GSPRRCGGQG) each bind ATP. (6S)-NADPHX is bound at residue aspartate 258.

Belongs to the NnrD/CARKD family. The cofactor is Mg(2+).

It catalyses the reaction (6S)-NADHX + ATP = ADP + phosphate + NADH + H(+). It carries out the reaction (6S)-NADPHX + ATP = ADP + phosphate + NADPH + H(+). In terms of biological role, catalyzes the dehydration of the S-form of NAD(P)HX at the expense of ATP, which is converted to ADP. Together with NAD(P)HX epimerase, which catalyzes the epimerization of the S- and R-forms, the enzyme allows the repair of both epimers of NAD(P)HX, a damaged form of NAD(P)H that is a result of enzymatic or heat-dependent hydration. The protein is ATP-dependent (S)-NAD(P)H-hydrate dehydratase of Physcomitrium patens (Spreading-leaved earth moss).